The following is a 146-amino-acid chain: MPSKGPLQSVQVFGRKKTATAVAHCKRGNGLIKVNGRPLEMIEPRTLQYKLLEPVLLLGKERFAGVDIRVRVKGGGHVAQIYAIRQSISKALVAYYQKYVDEASKKEIKDILIQYDRTLLVADPRRCESKKFGGPGARARYQKSYR.

Ser-3 carries the post-translational modification Phosphoserine. Lys-60 is subject to N6-acetyllysine.

Belongs to the universal ribosomal protein uS9 family. As to quaternary structure, component of the small ribosomal subunit. Part of the small subunit (SSU) processome, composed of more than 70 proteins and the RNA chaperone small nucleolar RNA (snoRNA) U3.

The protein resides in the cytoplasm. It is found in the nucleus. The protein localises to the nucleolus. Its function is as follows. Component of the small ribosomal subunit. The ribosome is a large ribonucleoprotein complex responsible for the synthesis of proteins in the cell. Part of the small subunit (SSU) processome, first precursor of the small eukaryotic ribosomal subunit. During the assembly of the SSU processome in the nucleolus, many ribosome biogenesis factors, an RNA chaperone and ribosomal proteins associate with the nascent pre-rRNA and work in concert to generate RNA folding, modifications, rearrangements and cleavage as well as targeted degradation of pre-ribosomal RNA by the RNA exosome. The polypeptide is Small ribosomal subunit protein uS9 (RPS16) (Bos taurus (Bovine)).